The sequence spans 810 residues: Phenylalanine--tRNA ligase beta subunit (810 aa).

One can recognise a tRNA-binding domain in the interval 39 to 154 (APPTEKIVVG…EGTPVGQDIR (116 aa)). The B5 domain occupies 405 to 480 (PQRAPVSMRA…RIYGFEKIPA (76 aa)). 4 residues coordinate Mg(2+): Asp-458, Asp-464, Glu-467, and Glu-468. One can recognise an FDX-ACB domain in the interval 707-809 (SKFPPVRRDI…MARVYGARLR (103 aa)).

This sequence belongs to the phenylalanyl-tRNA synthetase beta subunit family. Type 1 subfamily. In terms of assembly, tetramer of two alpha and two beta subunits. Mg(2+) is required as a cofactor.

It is found in the cytoplasm. It catalyses the reaction tRNA(Phe) + L-phenylalanine + ATP = L-phenylalanyl-tRNA(Phe) + AMP + diphosphate + H(+). The protein is Phenylalanine--tRNA ligase beta subunit of Burkholderia mallei (strain ATCC 23344).